We begin with the raw amino-acid sequence, 121 residues long: T cell receptor alpha variable 23/delta variable 6 (121 aa).

An N-terminal signal peptide occupies residues 1-21; sequence MDKILGASFLVLWLQLCWVSG. Residues 30 to 121 enclose the Ig-like domain; the sequence is QQVKQSPQSL…DSATYFCAAS (92 aa). Residues C51 and C118 are joined by a disulfide bond. N95 carries an N-linked (GlcNAc...) asparagine glycan.

Alpha-beta TR is a heterodimer composed of an alpha and beta chain; disulfide-linked. The alpha-beta TR is associated with the transmembrane signaling CD3 coreceptor proteins to form the TR-CD3 (TcR or TCR). The assembly of alpha-beta TR heterodimers with CD3 occurs in the endoplasmic reticulum where a single alpha-beta TR heterodimer associates with one CD3D-CD3E heterodimer, one CD3G-CD3E heterodimer and one CD247 homodimer forming a stable octameric structure. CD3D-CD3E and CD3G-CD3E heterodimers preferentially associate with TR alpha and TR beta chains, respectively. The association of the CD247 homodimer is the last step of TcR assembly in the endoplasmic reticulum and is required for transport to the cell surface.

It is found in the cell membrane. Its function is as follows. V region of the variable domain of T cell receptor (TR) alpha chain that participates in the antigen recognition. Alpha-beta T cell receptors are antigen specific receptors which are essential to the immune response and are present on the cell surface of T lymphocytes. Recognize peptide-major histocompatibility (MH) (pMH) complexes that are displayed by antigen presenting cells (APC), a prerequisite for efficient T cell adaptive immunity against pathogens. Binding of alpha-beta TR to pMH complex initiates TR-CD3 clustering on the cell surface and intracellular activation of LCK that phosphorylates the ITAM motifs of CD3G, CD3D, CD3E and CD247 enabling the recruitment of ZAP70. In turn ZAP70 phosphorylates LAT, which recruits numerous signaling molecules to form the LAT signalosome. The LAT signalosome propagates signal branching to three major signaling pathways, the calcium, the mitogen-activated protein kinase (MAPK) kinase and the nuclear factor NF-kappa-B (NF-kB) pathways, leading to the mobilization of transcription factors that are critical for gene expression and essential for T cell growth and differentiation. The T cell repertoire is generated in the thymus, by V-(D)-J rearrangement. This repertoire is then shaped by intrathymic selection events to generate a peripheral T cell pool of self-MH restricted, non-autoaggressive T cells. Post-thymic interaction of alpha-beta TR with the pMH complexes shapes TR structural and functional avidity. This Homo sapiens (Human) protein is T cell receptor alpha variable 23/delta variable 6.